We begin with the raw amino-acid sequence, 541 residues long: Protein yellow (541 aa).

The signal sequence occupies residues 1–21 (MFQDKGWILVTLITLVTPSWA). Asparagine 144 and asparagine 215 each carry an N-linked (GlcNAc...) asparagine glycan. The interval 443 to 463 (QKPQTSWASSPPPPSRTYLPA) is disordered.

Belongs to the major royal jelly protein family.

The protein localises to the secreted. Its function is as follows. Controls the pigmentation pattern of the adult cuticle and larval mouth parts. This chain is Protein yellow (y), found in Drosophila mauritiana (Fruit fly).